Consider the following 349-residue polypeptide: S-adenosylmethionine:tRNA ribosyltransferase-isomerase (349 aa).

The protein belongs to the QueA family. Monomer.

It is found in the cytoplasm. The enzyme catalyses 7-aminomethyl-7-carbaguanosine(34) in tRNA + S-adenosyl-L-methionine = epoxyqueuosine(34) in tRNA + adenine + L-methionine + 2 H(+). It participates in tRNA modification; tRNA-queuosine biosynthesis. Transfers and isomerizes the ribose moiety from AdoMet to the 7-aminomethyl group of 7-deazaguanine (preQ1-tRNA) to give epoxyqueuosine (oQ-tRNA). This is S-adenosylmethionine:tRNA ribosyltransferase-isomerase from Pseudomonas putida (strain ATCC 700007 / DSM 6899 / JCM 31910 / BCRC 17059 / LMG 24140 / F1).